Reading from the N-terminus, the 491-residue chain is Katanin p60 ATPase-containing subunit A1 (491 aa).

Residues M1–Y29 form an interaction with KATNB1 region. An interaction with dynein and NDEL1 region spans residues M1–S75. Positions M1–T185 are interaction with microtubules. 2 positions are modified to phosphoserine; by DYRK2: S42 and S109. Residues Q87–T185 form a disordered region. The residue at position 133 (T133) is a Phosphothreonine; by DYRK2. Residues H145–K169 are compositionally biased toward basic and acidic residues. S170 bears the Phosphoserine mark. G249–T256 lines the ATP pocket.

Belongs to the AAA ATPase family. Katanin p60 subunit A1 subfamily. Can homooligomerize into hexameric rings, which may be promoted by interaction with microtubules. Interacts with KATNB1, which may serve as a targeting subunit. Interacts with ASPM; the katanin complex formation KATNA1:KATNB1 is required for the association of ASPM Interacts with dynein and NDEL1. Associates with the E3 ligase complex containing DYRK2, EDD/UBR5, DDB1 and DCAF1 proteins (EDVP complex). Interacts with KLHL42 (via the kelch domains). Interacts with CUL3; the interaction is enhanced by KLHL42. Interacts with KATNB1 and KATNBL1. Interacts with CAMSAP2 and CAMSAP3; leading to regulate the length of CAMSAP-decorated microtubule stretches. Phosphorylation by DYRK2 triggers ubiquitination and subsequent degradation. In terms of processing, ubiquitinated by the BCR(KLHL42) E3 ubiquitin ligase complex, leading to its proteasomal degradation. Ubiquitinated by the EDVP E3 ligase complex and subsequently targeted for proteasomal degradation.

It is found in the cytoplasm. The protein resides in the midbody. It localises to the cytoskeleton. Its subcellular location is the microtubule organizing center. The protein localises to the centrosome. It is found in the spindle pole. The protein resides in the spindle. The enzyme catalyses n ATP + n H2O + a microtubule = n ADP + n phosphate + (n+1) alpha/beta tubulin heterodimers.. With respect to regulation, ATPase activity is stimulated by microtubules, which promote homooligomerization. ATP-dependent microtubule severing is stimulated by interaction with KATNB1. Functionally, catalytic subunit of a complex which severs microtubules in an ATP-dependent manner. Microtubule severing may promote rapid reorganization of cellular microtubule arrays and the release of microtubules from the centrosome following nucleation. Microtubule release from the mitotic spindle poles may allow depolymerization of the microtubule end proximal to the spindle pole, leading to poleward microtubule flux and poleward motion of chromosome. Microtubule release within the cell body of neurons may be required for their transport into neuronal processes by microtubule-dependent motor proteins. This transport is required for axonal growth. The chain is Katanin p60 ATPase-containing subunit A1 from Macaca fascicularis (Crab-eating macaque).